The chain runs to 558 residues: Pre-mRNA-processing factor 17 (558 aa).

2 disordered regions span residues 1–23 and 117–197; these read MLVANYSSDSEEQENSQSPNIQP and DDNE…GQNE. Residues 126-141 show a composition bias toward basic and acidic residues; sequence DLKRKSQKIKERREDP. Residues 162–171 are compositionally biased toward low complexity; it reads SEQSSSPLEY. Over residues 180–189 the composition is skewed to basic and acidic residues; sequence LDVKSEKDTE. WD repeat units lie at residues 264-304, 308-349, 351-391, 394-433, 437-476, 484-523, and 526-558; these read GHTK…SLLR, GHAR…NCFN, DRLT…IVQA, HHLGGINSITFLENGKRFVTTSDDSSMRFWEYGTPVPIKF, IAMHSMPRVALRPNGKSIACQSLDNCIYVYSAYEKYRQNK, SCSGYSLEVGFSPDGRFVFSGDSSGNACFWDWKTCKLMAK, and AHSGPVQSMAFHPQETSKVATSSIVDGSIKYWD.

In terms of assembly, belongs to the 40S cdc5-associated complex (or cwf complex), a spliceosome sub-complex reminiscent of a late-stage spliceosome composed of the U2, U5 and U6 snRNAs and at least brr2, cdc5, cwf2/prp3, cwf3/syf1, cwf4/syf3, cwf5/ecm2, spp42/cwf6, cwf7/spf27, cwf8, cwf9, cwf10, cwf11, cwf12, prp45/cwf13, cwf14, cwf15, cwf16, cwf17, cwf18, cwf19, cwf20, cwf21, cwf22, cwf23, cwf24, cwf25, cwf26, cyp7/cwf27, cwf28, cwf29/ist3, lea1, msl1, prp5/cwf1, prp10, prp12/sap130, prp17, prp22, sap61, sap62, sap114, sap145, slu7, smb1, smd1, smd3, smf1, smg1 and syf2.

Its subcellular location is the nucleus. Functions in the second step of pre-mRNA splicing. Involved in splicing intron which are longer than 200 nucleotides. The polypeptide is Pre-mRNA-processing factor 17 (prp17) (Schizosaccharomyces pombe (strain 972 / ATCC 24843) (Fission yeast)).